The primary structure comprises 171 residues: Superoxide dismutase [Cu-Zn] 2 (171 aa).

An N-terminal signal peptide occupies residues 1 to 20 (MKKLSGVLAGSLLLISASFS). 3 residues coordinate Cu cation: His67, His69, and His85. A disulfide bond links Cys74 and Cys167. Positions 85, 93, 102, and 105 each coordinate Zn(2+). His147 provides a ligand contact to Cu cation.

Belongs to the Cu-Zn superoxide dismutase family. Cu cation serves as cofactor. Requires Zn(2+) as cofactor.

The enzyme catalyses 2 superoxide + 2 H(+) = H2O2 + O2. Its function is as follows. Destroys radicals which are normally produced within the cells and which are toxic to biological systems. The polypeptide is Superoxide dismutase [Cu-Zn] 2 (sodC2) (Aquifex aeolicus (strain VF5)).